A 168-amino-acid chain; its full sequence is UPF0262 protein BBta_0898 (168 aa).

This sequence belongs to the UPF0262 family.

The chain is UPF0262 protein BBta_0898 from Bradyrhizobium sp. (strain BTAi1 / ATCC BAA-1182).